The chain runs to 632 residues: tRNA endonuclease VMS1 (632 aa).

The C2H2-type zinc finger occupies 72 to 96 (MRCSVCQMSFDSRNEQKAHYQTDYH). Residues 123–155 (HGIKSEDENSGGEQTSSDHEESEEASDRDPDLQ) form a disordered region. The 161-residue stretch at 232–392 (PMAISALFMV…KKAWCELSYL (161 aa)) folds into the VLRF1 domain. The active site involves Gln295. ANK repeat units follow at residues 470-500 (LTPT…DPTI) and 504-530 (LGRT…NLGE). Coiled-coil stretches lie at residues 544–582 (LSRE…QRFA) and 608–632 (TDEQ…KKKY). Residues 578–589 (KQRFAKDAERGP) show a composition bias toward basic and acidic residues. A disordered region spans residues 578–632 (KQRFAKDAERGPGKKLTNIPSIQQQNLNSLTDEQRRRLMREQRARAAEERMKKKY). Residues 595–608 (NIPSIQQQNLNSLT) show a composition bias toward polar residues. Residues 609 to 632 (DEQRRRLMREQRARAAEERMKKKY) show a composition bias toward basic and acidic residues.

It belongs to the ANKZF1/VMS1 family. Associates with 60S ribosomal subunit. Interacts with CDC48. Interacts with NPL4.

It is found in the cytoplasm. The protein localises to the mitochondrion. It localises to the endoplasmic reticulum membrane. Functionally, endonuclease that cleaves polypeptidyl-tRNAs downstream of the ribosome-associated quality control (RQC) pathway to release incompletely synthesized polypeptides for degradation. The RQC pathway disassembles aberrantly stalled translation complexes to recycle or degrade the constituent parts. VMS1 acts downstream disassembly of stalled ribosomes and specifically cleaves off the terminal 3'-CCA nucleotides universal to all tRNAs from polypeptidyl-tRNAs, releasing (1) ubiquitinated polypeptides from 60S ribosomal subunit for degradation by the ERAD pathway and (2) cleaved tRNAs for recycling. Component of an evolutionarily conserved system for ubiquitin-mediated mitochondria-associated protein degradation (MAD), which is necessary to maintain mitochondrial, cellular, and organismal viability. The protein is tRNA endonuclease VMS1 of Saccharomyces cerevisiae (strain ATCC 204508 / S288c) (Baker's yeast).